The following is a 93-amino-acid chain: Small ribosomal subunit protein uS19 (93 aa).

It belongs to the universal ribosomal protein uS19 family.

Protein S19 forms a complex with S13 that binds strongly to the 16S ribosomal RNA. This chain is Small ribosomal subunit protein uS19, found in Ehrlichia chaffeensis (strain ATCC CRL-10679 / Arkansas).